Reading from the N-terminus, the 491-residue chain is Ketol-acid reductoisomerase (NADP(+)) (491 aa).

One can recognise a KARI N-terminal Rossmann domain in the interval 15–208; it reads AQLGKCRFMG…GGHRAGVLES (194 aa). Residues 45-48, Arg68, Arg76, Ser78, and 108-110 contribute to the NADP(+) site; these read CGAQ and DKQ. Residue His132 is part of the active site. Gly158 is an NADP(+) binding site. KARI C-terminal knotted domains lie at 209-344 and 345-484; these read SFVA…TAPQ and FEGK…MTDM. Mg(2+) is bound by residues Asp217, Glu221, Glu389, and Glu393. Ser414 is a substrate binding site.

Belongs to the ketol-acid reductoisomerase family. The cofactor is Mg(2+).

It catalyses the reaction (2R)-2,3-dihydroxy-3-methylbutanoate + NADP(+) = (2S)-2-acetolactate + NADPH + H(+). The enzyme catalyses (2R,3R)-2,3-dihydroxy-3-methylpentanoate + NADP(+) = (S)-2-ethyl-2-hydroxy-3-oxobutanoate + NADPH + H(+). It functions in the pathway amino-acid biosynthesis; L-isoleucine biosynthesis; L-isoleucine from 2-oxobutanoate: step 2/4. The protein operates within amino-acid biosynthesis; L-valine biosynthesis; L-valine from pyruvate: step 2/4. In terms of biological role, involved in the biosynthesis of branched-chain amino acids (BCAA). Catalyzes an alkyl-migration followed by a ketol-acid reduction of (S)-2-acetolactate (S2AL) to yield (R)-2,3-dihydroxy-isovalerate. In the isomerase reaction, S2AL is rearranged via a Mg-dependent methyl migration to produce 3-hydroxy-3-methyl-2-ketobutyrate (HMKB). In the reductase reaction, this 2-ketoacid undergoes a metal-dependent reduction by NADPH to yield (R)-2,3-dihydroxy-isovalerate. The sequence is that of Ketol-acid reductoisomerase (NADP(+)) from Salmonella choleraesuis (strain SC-B67).